Reading from the N-terminus, the 365-residue chain is P43 5S RNA-binding protein (365 aa).

9 C2H2-type zinc fingers span residues leucine 15–histidine 39, tryptophan 45–histidine 69, leucine 75–histidine 100, leucine 106–histidine 130, serine 136–histidine 160, tyrosine 163–histidine 187, leucine 191–histidine 213, leucine 220–histidine 245, and histidine 251–histidine 275.

The 42S RNP particle comprises four subunits each of which contains one molecule of 5S RNA, three molecules of tRNA, two molecules of p50 (EF1-alpha) and one molecule of the 5S RNA binding protein 43.

P43 is a 5S RNA binding protein which is a major constituent of oocytes and comprises part of a 42S ribonucleoprotein storage particle. This Xenopus laevis (African clawed frog) protein is P43 5S RNA-binding protein.